Consider the following 45-residue polypeptide: DNA replication protein repEB (45 aa).

Its function is as follows. Involved in T4 DNA replication. Important for the priming of leading strand DNA synthesis at oriE. Binds to ssDNA. The polypeptide is DNA replication protein repEB (repEB) (Enterobacteria phage T4 (Bacteriophage T4)).